We begin with the raw amino-acid sequence, 142 residues long: Sec-independent protein translocase protein TatB (142 aa).

Residues 2 to 22 (FANVGWGEMLVLVIAGLVILG) traverse the membrane as a helical segment. The segment at 89–142 (DDSIFTGKFDQNGKSEKPEQKPEKPQSAPGPAAAVPDQPAGGRSGSTPYDTDAT) is disordered. Residues 99 to 112 (QNGKSEKPEQKPEK) show a composition bias toward basic and acidic residues. Over residues 133-142 (GSTPYDTDAT) the composition is skewed to polar residues.

This sequence belongs to the TatB family. The Tat system comprises two distinct complexes: a TatABC complex, containing multiple copies of TatA, TatB and TatC subunits, and a separate TatA complex, containing only TatA subunits. Substrates initially bind to the TatABC complex, which probably triggers association of the separate TatA complex to form the active translocon.

Its subcellular location is the cell membrane. Functionally, part of the twin-arginine translocation (Tat) system that transports large folded proteins containing a characteristic twin-arginine motif in their signal peptide across membranes. Together with TatC, TatB is part of a receptor directly interacting with Tat signal peptides. TatB may form an oligomeric binding site that transiently accommodates folded Tat precursor proteins before their translocation. This chain is Sec-independent protein translocase protein TatB, found in Mycolicibacterium vanbaalenii (strain DSM 7251 / JCM 13017 / BCRC 16820 / KCTC 9966 / NRRL B-24157 / PYR-1) (Mycobacterium vanbaalenii).